A 141-amino-acid chain; its full sequence is Hemoglobin subunit alpha (141 aa).

A Globin domain is found at 1-141; sequence VLSATDKANV…VATVLTSKYR (141 aa). Serine 3 is subject to Phosphoserine. N6-succinyllysine occurs at positions 7 and 11. Lysine 16 is subject to N6-acetyllysine; alternate. N6-succinyllysine; alternate is present on lysine 16. A Phosphotyrosine modification is found at tyrosine 24. An N6-succinyllysine modification is found at lysine 40. Histidine 58 serves as a coordination point for O2. Histidine 87 lines the heme b pocket. Serine 102 carries the phosphoserine modification. Threonine 108 is modified (phosphothreonine). The residue at position 124 (serine 124) is a Phosphoserine. Residues threonine 134 and threonine 137 each carry the phosphothreonine modification. Serine 138 bears the Phosphoserine mark.

The protein belongs to the globin family. In terms of assembly, heterotetramer of two alpha chains and two beta chains. In terms of tissue distribution, red blood cells.

Involved in oxygen transport from the lung to the various peripheral tissues. Its function is as follows. Hemopressin acts as an antagonist peptide of the cannabinoid receptor CNR1. Hemopressin-binding efficiently blocks cannabinoid receptor CNR1 and subsequent signaling. This chain is Hemoglobin subunit alpha (HBA), found in Erinaceus europaeus (Western European hedgehog).